Reading from the N-terminus, the 70-residue chain is Peptide BmKn1 (70 aa).

The N-terminal stretch at Met-1–Ala-23 is a signal peptide. Phe-36 bears the Phenylalanine amide mark. Positions Ser-40–Tyr-70 are excised as a propeptide.

The protein belongs to the non-disulfide-bridged peptide (NDBP) superfamily. Short antimicrobial peptide (group 4) family. In terms of tissue distribution, expressed by the venom gland.

The protein localises to the secreted. It is found in the target cell membrane. In terms of biological role, antibacterial peptide. This is Peptide BmKn1 from Olivierus martensii (Manchurian scorpion).